Reading from the N-terminus, the 321-residue chain is Glucokinase (321 aa).

8 to 13 is a binding site for ATP; it reads GDVGGT.

It belongs to the bacterial glucokinase family.

The protein localises to the cytoplasm. The enzyme catalyses D-glucose + ATP = D-glucose 6-phosphate + ADP + H(+). In Escherichia coli O127:H6 (strain E2348/69 / EPEC), this protein is Glucokinase.